We begin with the raw amino-acid sequence, 391 residues long: DNA/RNA-binding protein KIN17 (391 aa).

A C2H2-type zinc finger spans residues 28–50 (CQMCQKQCRDENGFKCHCMSESH). The tract at residues 51–160 (QRQLLLASEN…RQLELEKKKK (110 aa)) is winged helix-turn-helix (wHTH). Lysine 135 carries the N6,N6,N6-trimethyllysine; by METTL22; alternate modification. N6-methyllysine; alternate is present on lysine 135. Coiled-coil stretches lie at residues 147–180 (ETIR…VRRG) and 252–275 (AKKK…TART). Residues 206 to 258 (NLNKGAGGSAGATTSKSSSLGPSALKLLGSAASGKRKESSQSSAQPAKKKKSA) form a disordered region. The segment at 282–332 (GIVVKIITKKLGEKYHKKKGVVKEVIDRYTAVVKMTDSGDRLKLDQTHLET) is C-terminal subdomain A. The tract at residues 338-389 (GKRVLVLNGGYRGNEGTLESINEKAFSATIVIETGPLKGRRVEGIQYEDISK) is C-terminal subdomain B.

The protein belongs to the KIN17 family. Associated with DNA polymerase alpha, RFC1 and cyclin A, in multiprotein DNA replication complexes. Also associates with replication origins at the G1/S phase boundary and throughout the S phase in vivo. In terms of tissue distribution, highly expressed in transformed mouse AtT20 neuroendocrine cells. Expressed at a lower level in testis, kidney, skeletal muscle, liver, lung, spleen, brain and heart and kidney. In testis, expressed at much higher levels in proliferating cells than in differentiating cells. Not detected in embryo.

The protein resides in the nucleus. Its subcellular location is the cytoplasm. Involved in DNA replication and the cellular response to DNA damage. May participate in DNA replication factories and create a bridge between DNA replication and repair mediated by high molecular weight complexes. May play a role in illegitimate recombination and regulation of gene expression. May participate in mRNA processing. Binds, in vitro, to double-stranded DNA. Also shown to bind preferentially to curved DNA in vitro and in vivo. Binds via its C-terminal domain to RNA in vitro. This chain is DNA/RNA-binding protein KIN17, found in Mus musculus (Mouse).